Consider the following 248-residue polypeptide: Mannose-binding protein C (248 aa).

A signal peptide spans 1 to 20 (MSLFPSLPLLLLSMVAASYS). In terms of domain architecture, Collagen-like spans 42–99 (GINGFPGKDGRDGTKGEKGEPGQGLRGLQGPPGKLGPPGNPGPSGSPGAKGQKGDPGA). Positions 43 to 112 (INGFPGKDGR…CDSSLANPER (70 aa)) are disordered. The residue at position 47 (P47) is a 4-hydroxyproline. Positions 49–61 (KDGRDGTKGEKGE) are enriched in basic and acidic residues. 4-hydroxyproline is present on residues P73, P79, P82, and P88. A coiled-coil region spans residues 112–130 (RKTLQTEINRIKKWVTFSL). The C-type lectin domain maps to 134-245 (VGKKLFLTNG…CSSSHLVICE (112 aa)). Cystine bridges form between C155–C244 and C222–C236.

Oligomeric complex of 3 or more homotrimers. Interacts with MASP1 and MASP2. Interacts with MEP1A and MEP1B and may inhibit their catalytic activity. In terms of processing, hydroxylation on proline residues within the sequence motif, GXPG, is most likely to be 4-hydroxy as this fits the requirement for 4-hydroxylation in vertebrates.

It localises to the secreted. Calcium-dependent lectin involved in innate immune defense. Binds mannose, fucose and N-acetylglucosamine on different microorganisms and activates the lectin complement pathway. Binds to late apoptotic cells, as well as to apoptotic blebs and to necrotic cells, but not to early apoptotic cells, facilitating their uptake by macrophages. The sequence is that of Mannose-binding protein C (MBL2) from Callithrix jacchus (White-tufted-ear marmoset).